The sequence spans 290 residues: MNGKEGPGGFRKRKHDNFPHNQRREGKDASSSSPVMLAFKSFQQELDTRHDKYERLVKLSRDITVESKRTIFLLHRITSAPDMEEILTESESKLDGVRQKMLQVAQELSGEDMHQFHRAVTTGLQEYVEAVSFQHFIRTRSLISMEEINRQLTFTTDDSGKESKAPPADGQDKQLVTWRLKITPVDYLLGVADLTGELMRMCINSVGNGDIDTPFEVSQFLRQVYDGFSFIGNTGPYEVSKKLYTLKQSLSKVENACYALKVRGSEIPKHMLADVFSVKTEMIDQEESIS.

The tract at residues M1–P34 is disordered. Residues D16–D28 are compositionally biased toward basic and acidic residues. Positions L73–N208 are interaction with C1D. Residues E129 and E197 each contribute to the Mg(2+) site. A Glycyl lysine isopeptide (Lys-Gly) (interchain with G-Cter in SUMO2) cross-link involves residue K279.

It belongs to the translin family. In terms of assembly, ring-shaped heterooctamer of six TSN and two TSNAX subunits. Interacts with GOLGA3, TSNAXIP1, SUN1 and AKAP9. Interacts with the homodimeric form of C1D following gamma-radiation. Interacts with TSN and C1D in a mutually exclusive manner. In terms of processing, sumoylated with SUMO1. In terms of tissue distribution, detected in cerebellum.

Its subcellular location is the cytoplasm. The protein localises to the perinuclear region. It localises to the golgi apparatus. The protein resides in the nucleus. Functionally, acts in combination with TSN as an endonuclease involved in the activation of the RNA-induced silencing complex (RISC). Possible role in spermatogenesis. The protein is Translin-associated protein X (Tsnax) of Rattus norvegicus (Rat).